The following is a 242-amino-acid chain: Myb-related protein MYBAS2 (242 aa).

HTH myb-type domains follow at residues 5–61 and 62–112; these read REEI…HPGL and KRGR…RKKA. Residues 33 to 57 constitute a DNA-binding region (H-T-H motif); the sequence is WDFIAKVSGLNRTGKSCRLRWVNYL. A Bipartite nuclear localization signal 1 motif is present at residues 62 to 65; the sequence is KRGR. The H-T-H motif DNA-binding region spans 85–108; that stretch reads WSRIARRLPGRTDNEIKNYWRTHM. The Bipartite nuclear localization signal 2 signature appears at 109–117; that stretch reads RKKAQERKS. The interval 110–133 is disordered; the sequence is KKAQERKSNMSPSSSSSSLTYQSC. Residues 118–133 are compositionally biased toward low complexity; it reads NMSPSSSSSSLTYQSC.

It localises to the nucleus. Functionally, transcription factor. The chain is Myb-related protein MYBAS2 (MYBAS2) from Oryza sativa subsp. japonica (Rice).